The sequence spans 901 residues: Protein translocase subunit SecA (901 aa).

Residues Gln-87, 105–109, and Asp-512 each bind ATP; that span reads GEGKT. A disordered region spans residues 859–901; the sequence is HQDDDSAAAAALAAQTGERKVGRNDPCPCGSGKKYKQCHGRLQ. Zn(2+) contacts are provided by Cys-885, Cys-887, Cys-896, and His-897. Over residues 891 to 901 the composition is skewed to basic residues; it reads KKYKQCHGRLQ.

This sequence belongs to the SecA family. In terms of assembly, monomer and homodimer. Part of the essential Sec protein translocation apparatus which comprises SecA, SecYEG and auxiliary proteins SecDF-YajC and YidC. Requires Zn(2+) as cofactor.

The protein localises to the cell inner membrane. Its subcellular location is the cytoplasm. The catalysed reaction is ATP + H2O + cellular proteinSide 1 = ADP + phosphate + cellular proteinSide 2.. Its function is as follows. Part of the Sec protein translocase complex. Interacts with the SecYEG preprotein conducting channel. Has a central role in coupling the hydrolysis of ATP to the transfer of proteins into and across the cell membrane, serving both as a receptor for the preprotein-SecB complex and as an ATP-driven molecular motor driving the stepwise translocation of polypeptide chains across the membrane. The polypeptide is Protein translocase subunit SecA (Shigella dysenteriae serotype 1 (strain Sd197)).